The sequence spans 313 residues: Porphobilinogen deaminase (313 aa).

Residue cysteine 242 is modified to S-(dipyrrolylmethanemethyl)cysteine.

The protein belongs to the HMBS family. As to quaternary structure, monomer. The cofactor is dipyrromethane.

It carries out the reaction 4 porphobilinogen + H2O = hydroxymethylbilane + 4 NH4(+). It functions in the pathway porphyrin-containing compound metabolism; protoporphyrin-IX biosynthesis; coproporphyrinogen-III from 5-aminolevulinate: step 2/4. Tetrapolymerization of the monopyrrole PBG into the hydroxymethylbilane pre-uroporphyrinogen in several discrete steps. This chain is Porphobilinogen deaminase, found in Escherichia fergusonii (strain ATCC 35469 / DSM 13698 / CCUG 18766 / IAM 14443 / JCM 21226 / LMG 7866 / NBRC 102419 / NCTC 12128 / CDC 0568-73).